The chain runs to 186 residues: Sec-independent protein translocase protein TatB (186 aa).

Residues 1–21 (MFDIGFSELILLMVLGLVVLG) form a helical membrane-spanning segment. Residues 120-186 (NAEKSQNAIS…SKSQSSKTKS (67 aa)) form a disordered region. The span at 177 to 186 (SKSQSSKTKS) shows a compositional bias: polar residues.

This sequence belongs to the TatB family. As to quaternary structure, the Tat system comprises two distinct complexes: a TatABC complex, containing multiple copies of TatA, TatB and TatC subunits, and a separate TatA complex, containing only TatA subunits. Substrates initially bind to the TatABC complex, which probably triggers association of the separate TatA complex to form the active translocon.

The protein localises to the cell inner membrane. Part of the twin-arginine translocation (Tat) system that transports large folded proteins containing a characteristic twin-arginine motif in their signal peptide across membranes. Together with TatC, TatB is part of a receptor directly interacting with Tat signal peptides. TatB may form an oligomeric binding site that transiently accommodates folded Tat precursor proteins before their translocation. This chain is Sec-independent protein translocase protein TatB, found in Haemophilus influenzae (strain ATCC 51907 / DSM 11121 / KW20 / Rd).